A 215-amino-acid chain; its full sequence is Pyridoxine/pyridoxamine 5'-phosphate oxidase (215 aa).

Residues 9 to 12 (RRDY) and Lys67 contribute to the substrate site. FMN contacts are provided by residues 62-67 (RVVLLK), 77-78 (FT), Lys84, and Gln106. 3 residues coordinate substrate: Tyr124, Arg128, and Ser132. FMN-binding positions include 141–142 (QS) and Trp186. A substrate-binding site is contributed by 192–194 (RLH). Residue Arg196 coordinates FMN.

This sequence belongs to the pyridoxamine 5'-phosphate oxidase family. Homodimer. It depends on FMN as a cofactor.

It carries out the reaction pyridoxamine 5'-phosphate + O2 + H2O = pyridoxal 5'-phosphate + H2O2 + NH4(+). The catalysed reaction is pyridoxine 5'-phosphate + O2 = pyridoxal 5'-phosphate + H2O2. It participates in cofactor metabolism; pyridoxal 5'-phosphate salvage; pyridoxal 5'-phosphate from pyridoxamine 5'-phosphate: step 1/1. It functions in the pathway cofactor metabolism; pyridoxal 5'-phosphate salvage; pyridoxal 5'-phosphate from pyridoxine 5'-phosphate: step 1/1. In terms of biological role, catalyzes the oxidation of either pyridoxine 5'-phosphate (PNP) or pyridoxamine 5'-phosphate (PMP) into pyridoxal 5'-phosphate (PLP). The sequence is that of Pyridoxine/pyridoxamine 5'-phosphate oxidase from Chromohalobacter salexigens (strain ATCC BAA-138 / DSM 3043 / CIP 106854 / NCIMB 13768 / 1H11).